Consider the following 168-residue polypeptide: Disulfide bond formation protein B 1 (168 aa).

The Cytoplasmic portion of the chain corresponds to 1–14; the sequence is MNELTSRLNRERRF. The chain crosses the membrane as a helical span at residues 15 to 31; it reads LVLLGVICLALIGGALY. Topologically, residues 32–49 are periplasmic; the sequence is MQVVLGEAPCPLCILQRY. A disulfide bridge connects residues Cys-41 and Cys-44. Residues 50 to 65 traverse the membrane as a helical segment; sequence ALLFIAIFAFIAAAMP. Over 66-72 the chain is Cytoplasmic; the sequence is GRKSLTF. The chain crosses the membrane as a helical span at residues 73–89; sequence FEVLVVLSAIGGIVAAG. Residues 90–144 lie on the Periplasmic side of the membrane; that stretch reads NHVYILANPMVSCGIDTLQPIVDDLPLAKLWPLAFQVDGFCSTPYPPILGLSLAQ. An intrachain disulfide couples Cys-102 to Cys-130. The helical transmembrane segment at 145–163 threads the bilayer; the sequence is WALVAFVLTTVLVPLGIYR. The Cytoplasmic segment spans residues 164 to 168; sequence NRRRG.

It belongs to the DsbB family.

Its subcellular location is the cell inner membrane. In terms of biological role, required for disulfide bond formation in some periplasmic proteins. Acts by oxidizing the DsbA protein. This chain is Disulfide bond formation protein B 1, found in Pseudomonas entomophila (strain L48).